Here is a 183-residue protein sequence, read N- to C-terminus: Auxin-responsive protein IAA20 (183 aa).

Disordered regions lie at residues 1 to 23 and 42 to 77; these read MELE…TATA and GFEE…NKRR. An EAR-like (transcriptional repression) motif is present at residues 3 to 7; it reads LELGL. The PB1 domain maps to 98–183; the sequence is GGYVKVKMEG…KSVKRLKILV (86 aa).

Belongs to the Aux/IAA family. As to quaternary structure, homodimers and heterodimers. As to expression, expressed at very low levels in etiolated seedlings and flowers.

The protein localises to the nucleus. Its function is as follows. Aux/IAA proteins are short-lived transcriptional factors that function as repressors of early auxin response genes at low auxin concentrations. This is Auxin-responsive protein IAA20 (IAA20) from Oryza sativa subsp. japonica (Rice).